A 479-amino-acid chain; its full sequence is Cardiolipin synthase A (479 aa).

The next 2 membrane-spanning stretches (helical) occupy residues 8 to 28 (IFGY…IHAV) and 38 to 58 (IAWA…YLVF). PLD phosphodiesterase domains are found at residues 218 to 245 (VNFR…GDEY) and 392 to 419 (QPGF…DNRS). Residues histidine 223, lysine 225, aspartate 230, histidine 397, lysine 399, and aspartate 404 contribute to the active site.

This sequence belongs to the phospholipase D family. Cardiolipin synthase subfamily. ClsA sub-subfamily.

It localises to the cell inner membrane. The enzyme catalyses 2 a 1,2-diacyl-sn-glycero-3-phospho-(1'-sn-glycerol) = a cardiolipin + glycerol. Catalyzes the reversible phosphatidyl group transfer from one phosphatidylglycerol molecule to another to form cardiolipin (CL) (diphosphatidylglycerol) and glycerol. The sequence is that of Cardiolipin synthase A from Pseudomonas fluorescens (strain ATCC BAA-477 / NRRL B-23932 / Pf-5).